Consider the following 1067-residue polypeptide: TBC1 domain family member 31 (1067 aa).

WD repeat units lie at residues 36 to 75, 76 to 119, 120 to 161, 162 to 201, 202 to 249, and 250 to 288; these read GKVVRFLHVTFDTTGDCFLAGDHHGNIYLFDISRNRFRLV, LKTG…SWMR, GHEG…KLNI, RQSVGIQKVFFLPLSNTILSCFSDDSIFAWECDTLFCKYQ, LPLP…RVIQ, and MPSQVRTIRQLEFLPDSFDGGASQTLGVLSQDGMMRFIN. Residues 419–594 enclose the Rab-GAP TBC domain; that stretch reads EYPAKYRMFV…RLFDNIFSNH (176 aa). A coiled-coil region spans residues 724–773; it reads QQELLQKAEEQRKHVLEQEEEKLTQQRAKLAAMKRELKVKELQLLDATRR. Composition is skewed to basic and acidic residues over residues 896–912 and 926–937; these read KADAERERSRGGVEELQ and MREEAHRKKDEA. Disordered regions lie at residues 896–955 and 1045–1067; these read KADA…HSDG and AARAKEGSSASSQTVCTPTPVSP. 2 stretches are compositionally biased toward polar residues: residues 941–953 and 1052–1067; these read IQESLQPRPSTHS and SSASSQTVCTPTPVSP.

It localises to the cytoplasm. It is found in the cytoskeleton. Its subcellular location is the microtubule organizing center. The protein localises to the centrosome. The protein resides in the centriolar satellite. It localises to the cilium basal body. Molecular adapter which is involved in cilium biogenesis. Part of a functional complex including OFD1 a centriolar protein involved in cilium assembly. Could regulate the cAMP-dependent phosphorylation of OFD1, and its subsequent ubiquitination by PJA2 which ultimately leads to its proteasomal degradation. The protein is TBC1 domain family member 31 of Oryzias latipes (Japanese rice fish).